The chain runs to 325 residues: MATVIDTLKARGSEDRAARHPEKQNRPDTPVLRKPEWLRVRAPGSGQYNETKGIVREHKLHTVCEEAACPNIGECWSQKHATMMIMGEICTRACAFCNVTTGLPTQLDPDEPRRVAEAVAKMGLKHVVITSVDRDDLLDGGARHFAEVVTSIRAAAPGTTIEILTPDFLRKDGAENVVIDSKPDVFNHNLETVPRLYLKIRPGARYYNSLRLLDRVKQRDPSQFTKSGLMVGLGETKEEVMQVMDDMRSAGVDFITIGQYLQPTRKHAAIDRFVTPEEFKAYEAIARAKGFLMVSSSPLTRSSHHAGEDFAKLQAARRALDARTA.

The segment at 1-33 (MATVIDTLKARGSEDRAARHPEKQNRPDTPVLR) is disordered. The span at 8–33 (LKARGSEDRAARHPEKQNRPDTPVLR) shows a compositional bias: basic and acidic residues. Cys-64, Cys-69, Cys-75, Cys-90, Cys-94, Cys-97, and Ser-303 together coordinate [4Fe-4S] cluster. Residues 76–292 (WSQKHATMMI…EAIARAKGFL (217 aa)) form the Radical SAM core domain.

The protein belongs to the radical SAM superfamily. Lipoyl synthase family. [4Fe-4S] cluster serves as cofactor.

It localises to the cytoplasm. It carries out the reaction [[Fe-S] cluster scaffold protein carrying a second [4Fe-4S](2+) cluster] + N(6)-octanoyl-L-lysyl-[protein] + 2 oxidized [2Fe-2S]-[ferredoxin] + 2 S-adenosyl-L-methionine + 4 H(+) = [[Fe-S] cluster scaffold protein] + N(6)-[(R)-dihydrolipoyl]-L-lysyl-[protein] + 4 Fe(3+) + 2 hydrogen sulfide + 2 5'-deoxyadenosine + 2 L-methionine + 2 reduced [2Fe-2S]-[ferredoxin]. It functions in the pathway protein modification; protein lipoylation via endogenous pathway; protein N(6)-(lipoyl)lysine from octanoyl-[acyl-carrier-protein]: step 2/2. Catalyzes the radical-mediated insertion of two sulfur atoms into the C-6 and C-8 positions of the octanoyl moiety bound to the lipoyl domains of lipoate-dependent enzymes, thereby converting the octanoylated domains into lipoylated derivatives. This is Lipoyl synthase from Caulobacter vibrioides (strain ATCC 19089 / CIP 103742 / CB 15) (Caulobacter crescentus).